A 111-amino-acid chain; its full sequence is Phosphoribosyl-AMP cyclohydrolase (111 aa).

Mg(2+) is bound at residue D80. C81 contacts Zn(2+). D82 and D84 together coordinate Mg(2+). Zn(2+)-binding residues include C97 and C104.

Belongs to the PRA-CH family. As to quaternary structure, homodimer. It depends on Mg(2+) as a cofactor. Zn(2+) serves as cofactor.

The protein localises to the cytoplasm. It catalyses the reaction 1-(5-phospho-beta-D-ribosyl)-5'-AMP + H2O = 1-(5-phospho-beta-D-ribosyl)-5-[(5-phospho-beta-D-ribosylamino)methylideneamino]imidazole-4-carboxamide. Its pathway is amino-acid biosynthesis; L-histidine biosynthesis; L-histidine from 5-phospho-alpha-D-ribose 1-diphosphate: step 3/9. Its function is as follows. Catalyzes the hydrolysis of the adenine ring of phosphoribosyl-AMP. This is Phosphoribosyl-AMP cyclohydrolase from Mycobacterium marinum (strain ATCC BAA-535 / M).